Consider the following 324-residue polypeptide: Geranylgeranyl diphosphate synthase (324 aa).

Residues K46, R49, and H78 each contribute to the isopentenyl diphosphate site. Residues D85 and D89 each contribute to the Mg(2+) site. Position 94 (R94) interacts with an all-trans-polyprenyl diphosphate. R95 contributes to the isopentenyl diphosphate binding site. Positions 176, 177, 214, 231, and 241 each coordinate an all-trans-polyprenyl diphosphate.

Belongs to the FPP/GGPP synthase family. Mg(2+) serves as cofactor.

It carries out the reaction isopentenyl diphosphate + (2E,6E)-farnesyl diphosphate = (2E,6E,10E)-geranylgeranyl diphosphate + diphosphate. It functions in the pathway isoprenoid biosynthesis; geranylgeranyl diphosphate biosynthesis; geranylgeranyl diphosphate from farnesyl diphosphate and isopentenyl diphosphate: step 1/1. Its function is as follows. Catalyzes the sequential condensation of isopentenyl pyrophosphate with the allylic pyrophosphates to yield geranylgeranyl diphosphate (GGPP) which is a precursor of the ether-linked lipids. This Methanosarcina mazei (strain ATCC BAA-159 / DSM 3647 / Goe1 / Go1 / JCM 11833 / OCM 88) (Methanosarcina frisia) protein is Geranylgeranyl diphosphate synthase.